A 211-amino-acid polypeptide reads, in one-letter code: Large ribosomal subunit protein uL3 (211 aa).

Positions 134 to 155 (ATHGNSLSHRAPGSIGQNQTPG) are disordered. Glutamine 152 bears the N5-methylglutamine mark.

It belongs to the universal ribosomal protein uL3 family. In terms of assembly, part of the 50S ribosomal subunit. Forms a cluster with proteins L14 and L19. In terms of processing, methylated by PrmB.

Functionally, one of the primary rRNA binding proteins, it binds directly near the 3'-end of the 23S rRNA, where it nucleates assembly of the 50S subunit. The sequence is that of Large ribosomal subunit protein uL3 from Methylococcus capsulatus (strain ATCC 33009 / NCIMB 11132 / Bath).